Here is a 128-residue protein sequence, read N- to C-terminus: Large ribosomal subunit protein bL17 (128 aa).

Belongs to the bacterial ribosomal protein bL17 family. In terms of assembly, part of the 50S ribosomal subunit. Contacts protein L32.

This chain is Large ribosomal subunit protein bL17, found in Streptococcus pneumoniae serotype 2 (strain D39 / NCTC 7466).